Here is a 447-residue protein sequence, read N- to C-terminus: uncharacterized protein (447 aa).

The protein localises to the mitochondrion. This is an uncharacterized protein from Dictyostelium discoideum (Social amoeba).